Consider the following 307-residue polypeptide: D-alanine--D-alanine ligase (307 aa).

One can recognise an ATP-grasp domain in the interval 101-301 (RDVLAAAGVP…FGELVRWMVD (201 aa)). 128-182 (LPPPYVIKPLGEGSSFGVFIVREDQAYPPQELTRSDWAFGNRVLVESYIGGRELT) contacts ATP. Residues D251, E268, and N270 each contribute to the Mg(2+) site.

This sequence belongs to the D-alanine--D-alanine ligase family. Mg(2+) is required as a cofactor. Requires Mn(2+) as cofactor.

Its subcellular location is the cytoplasm. It carries out the reaction 2 D-alanine + ATP = D-alanyl-D-alanine + ADP + phosphate + H(+). It participates in cell wall biogenesis; peptidoglycan biosynthesis. Functionally, cell wall formation. The sequence is that of D-alanine--D-alanine ligase from Beijerinckia indica subsp. indica (strain ATCC 9039 / DSM 1715 / NCIMB 8712).